Consider the following 168-residue polypeptide: Large ribosomal subunit protein uL10 (168 aa).

The protein belongs to the universal ribosomal protein uL10 family. In terms of assembly, part of the ribosomal stalk of the 50S ribosomal subunit. The N-terminus interacts with L11 and the large rRNA to form the base of the stalk. The C-terminus forms an elongated spine to which L12 dimers bind in a sequential fashion forming a multimeric L10(L12)X complex.

Forms part of the ribosomal stalk, playing a central role in the interaction of the ribosome with GTP-bound translation factors. This chain is Large ribosomal subunit protein uL10, found in Laribacter hongkongensis (strain HLHK9).